Here is a 445-residue protein sequence, read N- to C-terminus: Phosphoglucosamine mutase (445 aa).

Residue serine 103 is the Phosphoserine intermediate of the active site. 4 residues coordinate Mg(2+): serine 103, aspartate 240, aspartate 242, and aspartate 244. Phosphoserine is present on serine 103.

It belongs to the phosphohexose mutase family. It depends on Mg(2+) as a cofactor. Post-translationally, activated by phosphorylation.

The enzyme catalyses alpha-D-glucosamine 1-phosphate = D-glucosamine 6-phosphate. Functionally, catalyzes the conversion of glucosamine-6-phosphate to glucosamine-1-phosphate. The sequence is that of Phosphoglucosamine mutase from Cellvibrio japonicus (strain Ueda107) (Pseudomonas fluorescens subsp. cellulosa).